The chain runs to 426 residues: Phosphomethylpyrimidine synthase (426 aa).

Substrate-binding positions include asparagine 65, methionine 94, tyrosine 123, histidine 162, 184-186 (SRG), 225-228 (DGMR), and glutamate 264. A Zn(2+)-binding site is contributed by histidine 268. Residue tyrosine 291 coordinates substrate. Zn(2+) is bound at residue histidine 332. Residues cysteine 408, cysteine 411, and cysteine 415 each coordinate [4Fe-4S] cluster.

This sequence belongs to the ThiC family. [4Fe-4S] cluster is required as a cofactor.

The enzyme catalyses 5-amino-1-(5-phospho-beta-D-ribosyl)imidazole + S-adenosyl-L-methionine = 4-amino-2-methyl-5-(phosphooxymethyl)pyrimidine + CO + 5'-deoxyadenosine + formate + L-methionine + 3 H(+). The protein operates within cofactor biosynthesis; thiamine diphosphate biosynthesis. Its function is as follows. Catalyzes the synthesis of the hydroxymethylpyrimidine phosphate (HMP-P) moiety of thiamine from aminoimidazole ribotide (AIR) in a radical S-adenosyl-L-methionine (SAM)-dependent reaction. The sequence is that of Phosphomethylpyrimidine synthase from Methanococcus maripaludis (strain C7 / ATCC BAA-1331).